Consider the following 83-residue polypeptide: Kunitz-type serine protease inhibitor blackelin-3 (83 aa).

An N-terminal signal peptide occupies residues 1-24 (MSSGGLLLLLGLLTLWEVLTPVSS). Residues 31–81 (CELPADPGPCNGLFQAFYYNPVQRKCLKFRYGGCKANPNTFKTIEECKRIC) form the BPTI/Kunitz inhibitor domain. 3 disulfide bridges follow: cysteine 31-cysteine 81, cysteine 40-cysteine 64, and cysteine 56-cysteine 77.

Belongs to the venom Kunitz-type family. In terms of tissue distribution, expressed by the venom gland.

It is found in the secreted. In terms of biological role, serine protease inhibitor. The protein is Kunitz-type serine protease inhibitor blackelin-3 of Pseudechis porphyriacus (Red-bellied black snake).